Here is a 447-residue protein sequence, read N- to C-terminus: MTEPHVTVIGAGLAGSEAAWQAARLGVKVTLYEMRPHVTTAVHRTGLFAELVCSNSLRGAGLENAVGLLKEEMRRLGSLILREALQHAVPAGGALAVSREEFAAGVTAALTSHPNITVVREEVREIPPDGVVVIASGPLTSAPLAEAIRRFTGEESLAFYDAAAPIVNIETVNMDKVFRMSRYGKGEGDDYLNCPLTREEYEAFYEALVTAEKAMPHNPEDAQVCFFEGCLPVEEIARRGPDALRYGPMKPVGLIDPRTGRRPWAVVQLRQDNAAGTLYNMVGFQTSLKWSEQKRVFRMIPGLEEAEFERYGVIHRNTFMKSPRLLYPTGESRQRAGLFFAGQMTGVEGYVESAAGGLVAGINAARRALGLEPVTFPRETAIGSLLHYITHADPEHFQPMNIAFGLMPPLEGPKIRDKRARKRAISERALDVLAAWAPGHLGAPLLD.

10–15 is an FAD binding site; it reads GAGLAG.

The protein belongs to the MnmG family. TrmFO subfamily. It depends on FAD as a cofactor.

The protein resides in the cytoplasm. It carries out the reaction uridine(54) in tRNA + (6R)-5,10-methylene-5,6,7,8-tetrahydrofolate + NADH + H(+) = 5-methyluridine(54) in tRNA + (6S)-5,6,7,8-tetrahydrofolate + NAD(+). The catalysed reaction is uridine(54) in tRNA + (6R)-5,10-methylene-5,6,7,8-tetrahydrofolate + NADPH + H(+) = 5-methyluridine(54) in tRNA + (6S)-5,6,7,8-tetrahydrofolate + NADP(+). In terms of biological role, catalyzes the folate-dependent formation of 5-methyl-uridine at position 54 (M-5-U54) in all tRNAs. The sequence is that of Methylenetetrahydrofolate--tRNA-(uracil-5-)-methyltransferase TrmFO from Symbiobacterium thermophilum (strain DSM 24528 / JCM 14929 / IAM 14863 / T).